A 409-amino-acid chain; its full sequence is Toluene 1,2-dioxygenase system ferredoxin--NAD(+) reductase component (409 aa).

FAD is bound at residue 4-35 (HVAIIGNGVGGFTTAQALRAEGFEGRISLIGD). 145-173 (RLLIVGGGLIGCEVATTARKLGLSVTILE) provides a ligand contact to NAD(+).

It belongs to the bacterial ring-hydroxylating dioxygenase ferredoxin reductase family. In terms of assembly, this dioxygenase system consists of four proteins: the two subunits of the hydroxylase component (todC1 and todC2), a ferredoxin (TodB) and a ferredoxin reductase (TodA). The cofactor is FAD.

It catalyses the reaction 2 reduced [2Fe-2S]-[ferredoxin] + NAD(+) + H(+) = 2 oxidized [2Fe-2S]-[ferredoxin] + NADH. Its pathway is xenobiotic degradation; toluene degradation. Its function is as follows. Part of the electron transfer component of toluene 1,2-dioxygenase, transfers electrons from ferredoxin (TodB) to NADH. The polypeptide is Toluene 1,2-dioxygenase system ferredoxin--NAD(+) reductase component (todA) (Pseudomonas putida (Arthrobacter siderocapsulatus)).